Reading from the N-terminus, the 167-residue chain is Cell division protein SepF (167 aa).

Residues 25-64 form a disordered region; that stretch reads EEDVAPVNNSTFQEKKHKKRSAVQRKQKNSDQEGDSVVPL. Over residues 39-51 the composition is skewed to basic residues; sequence KKHKKRSAVQRKQ.

This sequence belongs to the SepF family. As to quaternary structure, homodimer. Interacts with FtsZ.

Its subcellular location is the cytoplasm. Its function is as follows. Cell division protein that is part of the divisome complex and is recruited early to the Z-ring. Probably stimulates Z-ring formation, perhaps through the cross-linking of FtsZ protofilaments. Its function overlaps with FtsA. The protein is Cell division protein SepF of Natranaerobius thermophilus (strain ATCC BAA-1301 / DSM 18059 / JW/NM-WN-LF).